The following is a 233-amino-acid chain: Large ribosomal subunit protein uL1 (233 aa).

Belongs to the universal ribosomal protein uL1 family. In terms of assembly, part of the 50S ribosomal subunit.

Functionally, binds directly to 23S rRNA. The L1 stalk is quite mobile in the ribosome, and is involved in E site tRNA release. In terms of biological role, protein L1 is also a translational repressor protein, it controls the translation of the L11 operon by binding to its mRNA. In Rhizobium johnstonii (strain DSM 114642 / LMG 32736 / 3841) (Rhizobium leguminosarum bv. viciae), this protein is Large ribosomal subunit protein uL1.